We begin with the raw amino-acid sequence, 388 residues long: Transcription factor SOX-7 (388 aa).

Disordered regions lie at residues 20–46 (DAEL…SRIR) and 140–197 (RDQN…VDTY). Basic and acidic residues-rich tracts occupy residues 36-45 (PGDKGSESRI) and 146-164 (PEKR…DRGE). The segment at residues 45–113 (IRRPMNAFMV…QHMQDYPNYK (69 aa)) is a DNA-binding region (HMG box). The Sox C-terminal domain occupies 268–388 (VSMMSPVPGC…ATYYNSYSVS (121 aa)).

Interacts with CTNNB1/beta-catenin; this interaction may lead to the proteasomal degradation of active CTNNB1 and thus inhibition of Wnt/beta-catenin-stimulated transcription. In terms of tissue distribution, widely expressed in adult and fetal tissues. Present both in mesenchymal and epithelial cells in some adult tissues, including colon. Tends to be down-regulated in prostate adenocarcinomas and colorectal tumors due to promoter hypermethylation.

Its subcellular location is the nucleus. The protein localises to the cytoplasm. In terms of biological role, binds to and activates the CDH5 promoter, hence plays a role in the transcriptional regulation of genes expressed in the hemogenic endothelium and blocks further differentiation into blood precursors. May be required for the survival of both hematopoietic and endothelial precursors during specification. Competes with GATA4 for binding and activation of the FGF3 promoter. Represses Wnt/beta-catenin-stimulated transcription, probably by targeting CTNNB1 to proteasomal degradation. Binds the DNA sequence 5'-AACAAT-3'. This is Transcription factor SOX-7 (SOX7) from Homo sapiens (Human).